Reading from the N-terminus, the 181-residue chain is uncharacterized protein (181 aa).

It to M.pneumoniae MPN_635 C-terminal region.

This is an uncharacterized protein from Mycoplasma pneumoniae (strain ATCC 29342 / M129 / Subtype 1) (Mycoplasmoides pneumoniae).